The following is a 591-amino-acid chain: ATP-dependent RNA helicase DDX55 (591 aa).

A Q motif motif is present at residues W9 to S37. The 184-residue stretch at I40–I223 folds into the Helicase ATP-binding domain. A53–T60 is an ATP binding site. The short motif at D171 to D174 is the DEAD box element. Positions K254–D402 constitute a Helicase C-terminal domain. Disordered stretches follow at residues D482 to R559 and E571 to D591. Residues P485–K513 are compositionally biased toward basic and acidic residues. The stretch at F486–E542 forms a coiled coil. The span at K514–R538 shows a compositional bias: basic residues. Positions K533–K562 are important for nuclear localization. The segment covering S544 to L555 has biased composition (acidic residues).

It belongs to the DEAD box helicase family. DDX55/SPB4 subfamily. Interacts with 28S rRNA. Interacts with double-stranded RNA substrates in vitro; the interaction stimulates ATPase activity.

Its subcellular location is the nucleus. It localises to the nucleoplasm. The catalysed reaction is ATP + H2O = ADP + phosphate + H(+). In terms of biological role, probable ATP-binding RNA helicase. Has ATPase activity and is involved in the maturation of precursor large subunit rRNAs. The sequence is that of ATP-dependent RNA helicase DDX55 (DDX55) from Gallus gallus (Chicken).